The following is a 338-amino-acid chain: 5-dehydro-2-deoxygluconokinase (338 aa).

The protein belongs to the carbohydrate kinase PfkB family.

The catalysed reaction is 5-dehydro-2-deoxy-D-gluconate + ATP = 6-phospho-5-dehydro-2-deoxy-D-gluconate + ADP + H(+). It participates in polyol metabolism; myo-inositol degradation into acetyl-CoA; acetyl-CoA from myo-inositol: step 5/7. Functionally, catalyzes the phosphorylation of 5-dehydro-2-deoxy-D-gluconate (2-deoxy-5-keto-D-gluconate or DKG) to 6-phospho-5-dehydro-2-deoxy-D-gluconate (DKGP). This chain is 5-dehydro-2-deoxygluconokinase, found in Mesomycoplasma hyopneumoniae (strain 7448) (Mycoplasma hyopneumoniae).